A 548-amino-acid chain; its full sequence is 5-epi-aristolochene synthase (548 aa).

The (2E,6E)-farnesyl diphosphate site is built by arginine 264, aspartate 301, aspartate 305, arginine 441, and aspartate 444. Mg(2+) contacts are provided by aspartate 301 and aspartate 305. The DDXXD motif signature appears at 301–305 (DDTFD). Residues aspartate 444, aspartate 445, threonine 448, and glutamate 452 each contribute to the Mg(2+) site.

The protein belongs to the terpene synthase family. Monomer. It depends on Mg(2+) as a cofactor. Self-alkylated at Tyr-520 in the presence of (2Z,6E)-farnesyl diphosphate ((Z,E)-FPP). Self-alkylated at Asp-444 at warm temperature (42 degrees Celsius) in the presence of (2E,6E)-farnesyl diphosphate ((E,E)-FPP).

It is found in the cytoplasm. The catalysed reaction is (2E,6E)-farnesyl diphosphate = (+)-5-epi-aristolochene + diphosphate. The enzyme catalyses (2Z,6E)-farnesyl diphosphate = (+)-2-epi-prezizaene + diphosphate. It carries out the reaction (2Z,6E)-farnesyl diphosphate = (-)-alpha-cedrene + diphosphate. It catalyses the reaction (2Z,6E)-farnesyl diphosphate = (-)-beta-curcumene + diphosphate. The protein operates within secondary metabolite biosynthesis; terpenoid biosynthesis. Its activity is regulated as follows. Inhibited activity toward farnesyl diphosphate (FPP) by anilinogeranyl diphosphate (AGPP); AGPP undergoes a cyclization event leading to the formation of a novel macrocyclic paracyclophane alkaloid. Repressed by sesquilavandulyl diphosphate (SPP) via the induction of self-alkyation. Its function is as follows. Catalyzes the cyclization of trans,trans-farnesyl diphosphate (FPP) to the bicyclic intermediate 5-epi-aristolochene, initial step in the conversion of FPP to the sesquiterpenoid antifungal phytoalexin capsidiol. Produces germacrene A as an enzyme-bound intermediate that is not released by the enzyme, but is further cyclized to produce the bicyclic 5-epi-aristolochene. Mediates, at low levels, the formation of 4-epi-eremophilene and premnaspirodiene from trans,trans-farnesyl diphosphate. Also mediates the conversion of cis,trans-farnesyl diphosphate to cisoid minor products such as (+)-2-epi-prezizaene, (-)-alpha-cedrene and, to a lesser extent, (-)-beta-curcumene; also produces, at low levels, alpha-acoradiene and 4-epi-alpha-acoradiene, but barely nerolidol, alpha-bisabolol, epi-alpha-bisabolol and cis-farnesol. The polypeptide is 5-epi-aristolochene synthase (EAS3) (Nicotiana tabacum (Common tobacco)).